The primary structure comprises 921 residues: cGMP-dependent 3',5'-cyclic phosphodiesterase (921 aa).

Residue methionine 1 is modified to N-acetylmethionine. 2 disordered regions span residues 1-21 and 177-198; these read MRRQ…PPGS and ESSV…DQKG. The segment covering 177-188 has biased composition (polar residues); it reads ESSVAPEATQNP. GAF domains are found at residues 220-357 and 389-528; these read DASS…STVL and DVSV…GISI. 3',5'-cyclic GMP is bound by residues serine 411, aspartate 426, isoleucine 445, tyrosine 468, and threonine 479. In terms of domain architecture, PDEase spans 558-882; sequence SDDEYTKLLH…EHWTKVSHKF (325 aa). The active-site Proton donor is the histidine 636. Histidine 640, histidine 676, aspartate 677, and aspartate 788 together coordinate Zn(2+). Aspartate 677 is a binding site for Mg(2+).

It belongs to the cyclic nucleotide phosphodiesterase family. PDE2 subfamily. Homodimer. It depends on Zn(2+) as a cofactor. Mg(2+) serves as cofactor.

Its subcellular location is the cell membrane. The protein localises to the cytoplasm. It localises to the mitochondrion. The protein resides in the mitochondrion inner membrane. It is found in the mitochondrion outer membrane. The enzyme catalyses a nucleoside 3',5'-cyclic phosphate + H2O = a nucleoside 5'-phosphate + H(+). It catalyses the reaction 3',5'-cyclic GMP + H2O = GMP + H(+). The catalysed reaction is 3',5'-cyclic AMP + H2O = AMP + H(+). The 3',5'-cyclic-AMP phosphodiesterase activity is stimulated by 3',5'-cyclic GMP. CGMP-activated cyclic nucleotide phosphodiesterase with a dual-specificity for the second messengers cAMP and cGMP, which are key regulators of many important physiological processes. Has a higher efficiency with cGMP compared to cAMP. Plays a role in cell growth and migration. Functionally, regulates mitochondrial cAMP levels and respiration. Involved in the regulation of mitochondria morphology/dynamics and apoptotic cell death via local modulation of cAMP/PKA signaling in the mitochondrion, including the monitoring of local cAMP levels at the outer mitochondrial membrane and of PKA-dependent phosphorylation of DNM1L. In Bos taurus (Bovine), this protein is cGMP-dependent 3',5'-cyclic phosphodiesterase.